A 633-amino-acid polypeptide reads, in one-letter code: uncharacterized protein (633 aa).

A disordered region spans residues 1-188; sequence MNNRGGFSHP…GQSSFYNSSY (188 aa). Low complexity-rich tracts occupy residues 32-80 and 104-148; these read GQPQ…GGNN and NNGN…TNSR. Over residues 152–178 the composition is skewed to gly residues; sequence RGGSSRGGSSRGGNSGSSRGGSRGGYR. Residues 580–607 adopt a coiled-coil conformation; it reads KSKNWTVDQASDELKKLSKNLRLLVSKH. Residues 611–633 are disordered; it reads TKFQPPSADHTTQFEQDDEEEEN.

This is an uncharacterized protein from Dictyostelium discoideum (Social amoeba).